We begin with the raw amino-acid sequence, 150 residues long: UPF0756 membrane protein APL_0366 (150 aa).

Transmembrane regions (helical) follow at residues 12 to 34 (LVVL…ATVL), 52 to 72 (HGLS…IVSG), 82 to 102 (FLNW…WLGG), and 123 to 143 (IIGV…AGIL).

The protein belongs to the UPF0756 family.

The protein localises to the cell membrane. This Actinobacillus pleuropneumoniae serotype 5b (strain L20) protein is UPF0756 membrane protein APL_0366.